A 117-amino-acid chain; its full sequence is Ig heavy chain V region G4 (117 aa).

The signal sequence occupies residues 1-19 (MTHWLCFTLALVAVRGVLS). The interval 20–49 (EIQLVESGGAIRKPGDSLRLSCKASGFTFS) is framework-1. A disulfide bond links Cys41 and Cys115. The segment at 50 to 54 (DTWMA) is complementarity-determining-1. The interval 55-68 (WARQPPGKGLQWVG) is framework-2. The complementarity-determining-2 stretch occupies residues 69-85 (EINGNSETIRYAPEVKG). The segment at 86 to 117 (RLTISRDNTQNLLFLQISSLKPEDTATYYCAR) is framework-3.

The chain is Ig heavy chain V region G4 (G4) from Caiman crocodilus (Spectacled caiman).